Reading from the N-terminus, the 20-residue chain is Putative phosphoglycerate kinase (20 aa).

This sequence belongs to the phosphoglycerate kinase family. In terms of assembly, monomer.

Its subcellular location is the cytoplasm. The catalysed reaction is (2R)-3-phosphoglycerate + ATP = (2R)-3-phospho-glyceroyl phosphate + ADP. It participates in carbohydrate degradation; glycolysis; pyruvate from D-glyceraldehyde 3-phosphate: step 2/5. This is Putative phosphoglycerate kinase (pgk) from Clostridium pasteurianum.